Here is a 408-residue protein sequence, read N- to C-terminus: Imidazolonepropionase (408 aa).

The Fe(3+) site is built by His-73 and His-75. Zn(2+) contacts are provided by His-73 and His-75. Residues Arg-82, Tyr-145, and His-178 each contribute to the 4-imidazolone-5-propanoate site. Position 145 (Tyr-145) interacts with N-formimidoyl-L-glutamate. His-243 provides a ligand contact to Fe(3+). A Zn(2+)-binding site is contributed by His-243. Gln-246 contacts 4-imidazolone-5-propanoate. Asp-318 serves as a coordination point for Fe(3+). Asp-318 contacts Zn(2+). N-formimidoyl-L-glutamate is bound by residues Asn-320 and Gly-322. Ser-323 contacts 4-imidazolone-5-propanoate.

The protein belongs to the metallo-dependent hydrolases superfamily. HutI family. The cofactor is Zn(2+). It depends on Fe(3+) as a cofactor.

The protein resides in the cytoplasm. It catalyses the reaction 4-imidazolone-5-propanoate + H2O = N-formimidoyl-L-glutamate. Its pathway is amino-acid degradation; L-histidine degradation into L-glutamate; N-formimidoyl-L-glutamate from L-histidine: step 3/3. Functionally, catalyzes the hydrolytic cleavage of the carbon-nitrogen bond in imidazolone-5-propanoate to yield N-formimidoyl-L-glutamate. It is the third step in the universal histidine degradation pathway. The polypeptide is Imidazolonepropionase (Shewanella woodyi (strain ATCC 51908 / MS32)).